A 502-amino-acid chain; its full sequence is ATP synthase subunit alpha (502 aa).

169 to 176 (GDRQVGKT) serves as a coordination point for ATP.

This sequence belongs to the ATPase alpha/beta chains family. F-type ATPases have 2 components, CF(1) - the catalytic core - and CF(0) - the membrane proton channel. CF(1) has five subunits: alpha(3), beta(3), gamma(1), delta(1), epsilon(1). CF(0) has three main subunits: a(1), b(2) and c(9-12). The alpha and beta chains form an alternating ring which encloses part of the gamma chain. CF(1) is attached to CF(0) by a central stalk formed by the gamma and epsilon chains, while a peripheral stalk is formed by the delta and b chains.

Its subcellular location is the cell membrane. It catalyses the reaction ATP + H2O + 4 H(+)(in) = ADP + phosphate + 5 H(+)(out). Its function is as follows. Produces ATP from ADP in the presence of a proton gradient across the membrane. The alpha chain is a regulatory subunit. This chain is ATP synthase subunit alpha, found in Lysinibacillus sphaericus (strain C3-41).